A 292-amino-acid polypeptide reads, in one-letter code: MKSTFSTVLITGSSKGLGYALVKVGLAQGYNVIACSRAPDTITIEHSKLLKLKLDVTDVKSVETAFKDAKRRFGNVDIVINNAGYGLVGEFESYNIEEMHRQMNVNFWGVAYITKEALNLMRESGKGGRILQISSVAGYYPSPCLSMYNASKFAVEGLSQTIMRELDPNWNIAITIVQPGGMQTEWASSNMQWAKPHPAYENDRSWRPFWENYHGCEETDPNKAAELLYSIAKLDRPPQKLVLGHDSLELIRKQHQDIGEELESNVALSTSVAKDDFDPASVETLRQNLQSM.

NADP(+) contacts are provided by Leu17, Asp55, Asn82, and Lys115. Catalysis depends on Ser134, which acts as the Proton donor. Tyr148, Lys152, and Thr184 together coordinate NADP(+). Catalysis depends on Tyr148, which acts as the Proton acceptor. Residue Lys152 is the Lowers pKa of active site Tyr of the active site.

It belongs to the short-chain dehydrogenases/reductases (SDR) family.

It localises to the cytoplasm. This is an uncharacterized protein from Schizosaccharomyces pombe (strain 972 / ATCC 24843) (Fission yeast).